A 525-amino-acid chain; its full sequence is Probable histidine ammonia-lyase (525 aa).

A cross-link (5-imidazolinone (Ala-Gly)) is located at residues 145–147 (ASG). 2,3-didehydroalanine (Ser) is present on Ser-146.

Belongs to the PAL/histidase family. In terms of processing, contains an active site 4-methylidene-imidazol-5-one (MIO), which is formed autocatalytically by cyclization and dehydration of residues Ala-Ser-Gly.

It localises to the cytoplasm. The catalysed reaction is L-histidine = trans-urocanate + NH4(+). Its pathway is amino-acid degradation; L-histidine degradation into L-glutamate; N-formimidoyl-L-glutamate from L-histidine: step 1/3. The protein is Probable histidine ammonia-lyase of Halobacterium salinarum (strain ATCC 29341 / DSM 671 / R1).